The chain runs to 398 residues: Phosphoglycerate kinase (398 aa).

Residues 22 to 24 (DFN), Arg38, 61 to 64 (HLGR), Arg120, and Arg153 each bind substrate. ATP-binding positions include Lys206, Gly297, Glu328, and 354 to 357 (GGDT).

It belongs to the phosphoglycerate kinase family. As to quaternary structure, monomer.

The protein resides in the cytoplasm. It carries out the reaction (2R)-3-phosphoglycerate + ATP = (2R)-3-phospho-glyceroyl phosphate + ADP. It participates in carbohydrate degradation; glycolysis; pyruvate from D-glyceraldehyde 3-phosphate: step 2/5. The sequence is that of Phosphoglycerate kinase from Nautilia profundicola (strain ATCC BAA-1463 / DSM 18972 / AmH).